Here is a 492-residue protein sequence, read N- to C-terminus: MTELNKLTVADSIKGLKNKDFTSKELVNAHITQIEKHRNLNAYVTETFDLALKQAEAADQNYAQNQPRTLEGIPFAAKDLFCTKGIRTTACSNILKNFVPNYESSVTQNIFDKGGVMLGKTNMDEFAMGSANITSCFGNVISPWKANDDNADLVPGGSSGGSAAAVSGFMASAALGSDTGGSVRQPASFTGLVGFKPTYGRCSRYGMVSFASSLDQAGIFTRSVLDSSIMLEAMMGFDAKDSTSIKAEVPELQSAIGSSMKNIKIGVPLNLGEGGIEPDVMKIWQDTIELLKNAGAEIVDIILPHAKYGVAVYYVIAPAEASSNLSRYDGVRYGLRVERENMTLDEMYEMTRSAGFGEEVKRRIMIGTYVLSSNCMDAYYLKAQKVRRLVANDFNNAFEKVDAIVLPAAPTEAFKIAEKQNDPTIMYLNDLFTIPASLAGLPCASIPAGLSARGLPLGMQIIGKQLDEYNVLKVASTIESGVKHIKFEPAGF.

Catalysis depends on charge relay system residues K78 and S158. S182 acts as the Acyl-ester intermediate in catalysis.

Belongs to the amidase family. GatA subfamily. As to quaternary structure, heterotrimer of A, B and C subunits.

It catalyses the reaction L-glutamyl-tRNA(Gln) + L-glutamine + ATP + H2O = L-glutaminyl-tRNA(Gln) + L-glutamate + ADP + phosphate + H(+). Allows the formation of correctly charged Gln-tRNA(Gln) through the transamidation of misacylated Glu-tRNA(Gln) in organisms which lack glutaminyl-tRNA synthetase. The reaction takes place in the presence of glutamine and ATP through an activated gamma-phospho-Glu-tRNA(Gln). In Rickettsia akari (strain Hartford), this protein is Glutamyl-tRNA(Gln) amidotransferase subunit A.